The following is a 24-amino-acid chain: Humanin-like 10 (24 aa).

The protein belongs to the humanin family. As to expression, expressed in mature brain, thyroid gland and testis.

The protein resides in the secreted. It is found in the cytoplasm. In terms of biological role, plays a role as a neuroprotective and antiapoptotic factor. The polypeptide is Humanin-like 10 (Homo sapiens (Human)).